The chain runs to 547 residues: Chaperonin GroEL (547 aa).

Residues Thr-30–Pro-33, Lys-51, Asp-87–Thr-91, Gly-415, Asn-478–Ala-480, and Asp-494 contribute to the ATP site.

It belongs to the chaperonin (HSP60) family. Forms a cylinder of 14 subunits composed of two heptameric rings stacked back-to-back. Interacts with the co-chaperonin GroES.

The protein localises to the cytoplasm. The catalysed reaction is ATP + H2O + a folded polypeptide = ADP + phosphate + an unfolded polypeptide.. In terms of biological role, together with its co-chaperonin GroES, plays an essential role in assisting protein folding. The GroEL-GroES system forms a nano-cage that allows encapsulation of the non-native substrate proteins and provides a physical environment optimized to promote and accelerate protein folding. The protein is Chaperonin GroEL of Geobacter sp. (strain M21).